The sequence spans 470 residues: Properdin (470 aa).

Positions 1 to 26 (MTAPVQVPQSLLLLLMLLLTLPATGS) are cleaved as a signal peptide. TSP type-1 domains lie at 27–75 (DPVL…QACR), 76–133 (SPRW…QCCP), 135–190 (MGGW…QVCP), 192–254 (HGAW…PPCP), 256–312 (AGGW…VPCP), 314–376 (DGEW…QNCI), and 380–463 (KGSW…PACK). 3 cysteine pairs are disulfide-bonded: Cys31–Cys55, Cys42–Cys71, and Cys56–Cys74. Trp82 and Trp85 each carry a C-linked (Man) tryptophan glycan. 7 cysteine pairs are disulfide-bonded: Cys88-Cys126, Cys92-Cys132, Cys103-Cys110, Cys131-Cys169, Cys147-Cys183, Cys151-Cys189, and Cys162-Cys173. Residues Trp138, Trp141, and Trp144 are each glycosylated (C-linked (Man) tryptophan). The O-linked (Fuc...) threonine glycan is linked to Thr150. 3 C-linked (Man) tryptophan glycosylation sites follow: Trp195, Trp198, and Trp201. Disulfide bonds link Cys204-Cys247, Cys208-Cys253, and Cys223-Cys237. Ser207 carries an O-linked (Fuc...) serine glycan. C-linked (Man) tryptophan glycans are attached at residues Trp259 and Trp262. Intrachain disulfides connect Cys268/Cys305, Cys272/Cys311, and Cys283/Cys295. Thr271 carries an O-linked (Fuc...) threonine glycan. C-linked (Man) tryptophan glycans are attached at residues Trp320 and Trp323. 3 disulfide bridges follow: Cys326–Cys369, Cys336–Cys375, and Cys349–Cys359. Positions 350-358 (KGRKFNGQR) are interaction with Complement C3 beta chain. C-linked (Man) tryptophan glycans are attached at residues Trp383, Trp386, and Trp389. Intrachain disulfides connect Cys392–Cys456, Cys396–Cys462, and Cys408–Cys440. N-linked (GlcNAc...) asparagine glycosylation occurs at Asn429.

As to quaternary structure, in plasma, properdin exists as dimers, trimers or tetramers in the relative proportions of 26:54:20. Interacts with the pro-C3-convertase enzyme complex (C3b-Bb) comprised of Complement C3 beta chain (C3b) and the Complement factor B Bb fragment (Bb), where it binds (via its TSP type-1 5 domain) with C3b and Bb. This interaction stabilizes the complex and allows it to become the active C3-convertase enzyme complex (C3b-Bb-FP). Interacts with C3b. Interacts with CFB.

The protein resides in the secreted. A positive regulator of the alternate pathway of complement. It binds to and stabilizes the C3- and C5-convertase enzyme complexes. Inhibits CFI-CFH mediated degradation of Inhibits CFI-CFH mediated degradation of Complement C3 beta chain (C3b). This chain is Properdin (CFP), found in Cavia porcellus (Guinea pig).